We begin with the raw amino-acid sequence, 727 residues long: FACT complex subunit Ssrp1 (727 aa).

Disordered stretches follow at residues 458 to 565 (AEAR…AFML) and 596 to 727 (ELKD…EGSD). Composition is skewed to acidic residues over residues 464-479 (EEED…ESTD) and 487-508 (NESD…DDSD). Gly residues predominate over residues 510 to 519 (SGGGGDGGTD). 3 stretches are compositionally biased toward basic and acidic residues: residues 529 to 555 (KKNE…DTGK), 596 to 620 (ELKD…EMRN), and 675 to 703 (DQEK…KSES). A DNA-binding region (HMG box) is located at residues 556-622 (PKRGTSAFML…RYQEEMRNYK (67 aa)). The span at 704-727 (EGGDSDDASNASEDDDEEEDEGSD) shows a compositional bias: acidic residues.

This sequence belongs to the SSRP1 family. Component of the FACT complex, a stable heterodimer of dre4/spt16 and Ssrp.

The protein localises to the nucleus. The protein resides in the chromosome. It localises to the nucleolus. Its function is as follows. Component of the FACT complex, a general chromatin factor that acts to reorganize nucleosomes. The FACT complex is involved in multiple processes that require DNA as a template such as mRNA elongation, DNA replication and DNA repair. During transcription elongation the FACT complex acts as a histone chaperone that both destabilizes and restores nucleosomal structure. It facilitates the passage of RNA polymerase II and transcription by promoting the dissociation of one histone H2A-H2B dimer from the nucleosome, then subsequently promotes the reestablishment of the nucleosome following the passage of RNA polymerase II. Binds specifically to single-stranded DNA and RNA with highest affinity for nucleotides G and U. The FACT complex is required for expression of Hox genes. The protein is FACT complex subunit Ssrp1 (Ssrp) of Drosophila pseudoobscura pseudoobscura (Fruit fly).